The chain runs to 348 residues: Uroporphyrinogen decarboxylase (348 aa).

Residues 28 to 32 (RQAGR), D78, Y154, T209, and H325 contribute to the substrate site.

The protein belongs to the uroporphyrinogen decarboxylase family. In terms of assembly, homodimer.

It is found in the cytoplasm. It catalyses the reaction uroporphyrinogen III + 4 H(+) = coproporphyrinogen III + 4 CO2. It functions in the pathway porphyrin-containing compound metabolism; protoporphyrin-IX biosynthesis; coproporphyrinogen-III from 5-aminolevulinate: step 4/4. Its function is as follows. Catalyzes the decarboxylation of four acetate groups of uroporphyrinogen-III to yield coproporphyrinogen-III. The sequence is that of Uroporphyrinogen decarboxylase from Rhodopseudomonas palustris (strain BisA53).